A 228-amino-acid chain; its full sequence is 7-cyano-7-deazaguanine synthase (228 aa).

An ATP-binding site is contributed by 9-19; the sequence is LSGGPDSTTVL. Residues cysteine 193, cysteine 203, cysteine 206, and cysteine 209 each coordinate Zn(2+).

It belongs to the QueC family. Zn(2+) is required as a cofactor.

It carries out the reaction 7-carboxy-7-deazaguanine + NH4(+) + ATP = 7-cyano-7-deazaguanine + ADP + phosphate + H2O + H(+). It participates in purine metabolism; 7-cyano-7-deazaguanine biosynthesis. Catalyzes the ATP-dependent conversion of 7-carboxy-7-deazaguanine (CDG) to 7-cyano-7-deazaguanine (preQ(0)). This Rickettsia massiliae (strain Mtu5) protein is 7-cyano-7-deazaguanine synthase.